Consider the following 292-residue polypeptide: Shikimate dehydrogenase (NADP(+)) (292 aa).

Shikimate-binding positions include 22–24 and Ser-69; that span reads SLS. Catalysis depends on Lys-73, which acts as the Proton acceptor. Asn-94 and Asp-111 together coordinate shikimate. Residues 135 to 139 and Ile-236 contribute to the NADP(+) site; that span reads GVGGA. Residue Tyr-238 coordinates shikimate. Residue Gly-260 coordinates NADP(+).

This sequence belongs to the shikimate dehydrogenase family. In terms of assembly, homodimer.

The enzyme catalyses shikimate + NADP(+) = 3-dehydroshikimate + NADPH + H(+). It participates in metabolic intermediate biosynthesis; chorismate biosynthesis; chorismate from D-erythrose 4-phosphate and phosphoenolpyruvate: step 4/7. Involved in the biosynthesis of the chorismate, which leads to the biosynthesis of aromatic amino acids. Catalyzes the reversible NADPH linked reduction of 3-dehydroshikimate (DHSA) to yield shikimate (SA). The polypeptide is Shikimate dehydrogenase (NADP(+)) (Streptococcus pyogenes serotype M18 (strain MGAS8232)).